We begin with the raw amino-acid sequence, 353 residues long: Glycerol-3-phosphate dehydrogenase [NAD(P)+] (353 aa).

NADPH is bound by residues Trp-11, Arg-40, and Lys-115. Sn-glycerol 3-phosphate contacts are provided by Lys-115, Gly-156, and Ser-158. Residue Ala-160 coordinates NADPH. Lys-211, Asp-264, Ser-274, Arg-275, and Asn-276 together coordinate sn-glycerol 3-phosphate. Lys-211 functions as the Proton acceptor in the catalytic mechanism. Arg-275 is an NADPH binding site. Residues Val-299 and Glu-301 each coordinate NADPH.

The protein belongs to the NAD-dependent glycerol-3-phosphate dehydrogenase family.

It is found in the cytoplasm. The catalysed reaction is sn-glycerol 3-phosphate + NAD(+) = dihydroxyacetone phosphate + NADH + H(+). It catalyses the reaction sn-glycerol 3-phosphate + NADP(+) = dihydroxyacetone phosphate + NADPH + H(+). Its pathway is membrane lipid metabolism; glycerophospholipid metabolism. Its function is as follows. Catalyzes the reduction of the glycolytic intermediate dihydroxyacetone phosphate (DHAP) to sn-glycerol 3-phosphate (G3P), the key precursor for phospholipid synthesis. This is Glycerol-3-phosphate dehydrogenase [NAD(P)+] from Polaromonas sp. (strain JS666 / ATCC BAA-500).